Consider the following 640-residue polypeptide: Serine/threonine-protein kinase WNG1 (640 aa).

A signal peptide spans 1–70 (MPEQDLASGF…GVLCTVEAGA (70 aa)). Disordered stretches follow at residues 100–222 (PEVT…AQPT) and 237–280 (SHPD…DASN). Polar residues predominate over residues 104–120 (HASSEGSPQFESSLSQQ). Positions 124 to 141 (RPADRGEAHNGEEPRKDA) are enriched in basic and acidic residues. A compositionally biased stretch (low complexity) spans 175-186 (QRQASSAAESLA). Residues 248 to 279 (FSKKQEGRRERRLAVRGDDSFARGHNRDRDAS) are compositionally biased toward basic and acidic residues. In terms of domain architecture, Protein kinase spans 291 to 593 (WAKIAALATG…LKQVMEDPYF (303 aa)). Lysine 395 provides a ligand contact to ATP. Catalysis depends on aspartate 486, which acts as the Proton acceptor. The disordered stretch occupies residues 609–640 (PFRGDFSIDDPDAGGKMYIPPSKEQDHEQENE). Residues 631–640 (KEQDHEQENE) show a composition bias toward basic and acidic residues.

It belongs to the protein kinase superfamily. STE Ser/Thr protein kinase family. WNG subfamily. Mg(2+) is required as a cofactor.

It localises to the cytoplasmic granule. It is found in the secreted. Its subcellular location is the parasitophorous vacuole lumen. The catalysed reaction is L-seryl-[protein] + ATP = O-phospho-L-seryl-[protein] + ADP + H(+). It carries out the reaction L-threonyl-[protein] + ATP = O-phospho-L-threonyl-[protein] + ADP + H(+). Serine/threonine-protein kinase which, at the tachyzoite stage, phosphorylates several parasitophorous vacuole (PV)-resident proteins such as GRA2, GRA6 and GRA7. By phosphorylating GRA2 and GRA6, regulates the formation of a functional intravacuolar network (IVN); IVN is composed of membranous tubules that bud from the PV membrane into the vacuolar lumen. Plays a role in the establishement of chronic infection in the host by controlling cyst formation in the host tissues. This chain is Serine/threonine-protein kinase WNG1, found in Toxoplasma gondii.